The chain runs to 125 residues: Histone H2A.v3 (125 aa).

Belongs to the histone H2A family. As to quaternary structure, the nucleosome is a histone octamer containing two molecules each of H2A, H2B, H3 and H4 assembled in one H3-H4 heterotetramer and two H2A-H2B heterodimers. The octamer wraps approximately 147 bp of DNA.

The protein resides in the nucleus. It is found in the chromosome. In terms of biological role, core component of nucleosome which plays a central role in DNA double strand break (DSB) repair. Nucleosomes wrap and compact DNA into chromatin, limiting DNA accessibility to the cellular machineries which require DNA as a template. Histones thereby play a central role in transcription regulation, DNA repair, DNA replication and chromosomal stability. DNA accessibility is regulated via a complex set of post-translational modifications of histones, also called histone code, and nucleosome remodeling. In Dictyostelium discoideum (Social amoeba), this protein is Histone H2A.v3 (H2Av3).